A 148-amino-acid polypeptide reads, in one-letter code: Snaclec stejaggregin-A subunit beta-2 (148 aa).

Positions 1–23 are cleaved as a signal peptide; that stretch reads MGQFIFVSFGLLVVLLSLSGAGA. A disulfide bridge connects residues cysteine 27 and cysteine 38. The 112-residue stretch at 34–145 folds into the C-type lectin domain; that stretch reads YDLYCYKVFK…CSRTHYVVCK (112 aa). N-linked (GlcNAc...) asparagine glycosylation is found at asparagine 47 and asparagine 78. Intrachain disulfides connect cysteine 55–cysteine 144 and cysteine 121–cysteine 136.

The protein belongs to the snaclec family. As to quaternary structure, heteromultimer; disulfide-linked. In terms of tissue distribution, expressed by the venom gland.

It is found in the secreted. Interferes with one step of hemostasis (modulation of platelet aggregation, or coagulation cascade, for example). In Trimeresurus stejnegeri (Chinese green tree viper), this protein is Snaclec stejaggregin-A subunit beta-2.